A 341-amino-acid polypeptide reads, in one-letter code: DNA fragmentation factor subunit beta (341 aa).

One can recognise a CIDE-N domain in the interval 7–83 (KPKTFKLRSL…LLTAGQTWQG (77 aa)).

As to quaternary structure, heterodimer of DFFA and DFFB. Interacts with H1-1.

It localises to the cytoplasm. Its subcellular location is the nucleus. With respect to regulation, inhibited by DFFA (DFF45). Interacts with HIST1H1A. Nuclease that induces DNA fragmentation and chromatin condensation during apoptosis. Degrades naked DNA and induces apoptotic morphology. In Bos taurus (Bovine), this protein is DNA fragmentation factor subunit beta (DFFB).